The chain runs to 440 residues: Suppressor of cytokine signaling 4 (440 aa).

Residues 1 to 11 (MAENSESNSKN) are compositionally biased toward polar residues. The tract at residues 1-29 (MAENSESNSKNVDVRPKTSRSRSADRKDG) is disordered. Basic and acidic residues predominate over residues 12–29 (VDVRPKTSRSRSADRKDG). Residues 286–381 (CYWGVMDKYA…FFEPLLSTPL (96 aa)) form the SH2 domain. Residues 376 to 425 (LLSTPLIRTFPFSLQHICRTVICNCTTYDGIDALPIPSSMKLYLKEYHYK) form the SOCS box domain.

Its pathway is protein modification; protein ubiquitination. In terms of biological role, SOCS family proteins form part of a classical negative feedback system that regulates cytokine signal transduction. Substrate-recognition component of a SCF-like ECS (Elongin BC-CUL2/5-SOCS-box protein) E3 ubiquitin-protein ligase complex which mediates the ubiquitination and subsequent proteasomal degradation of target proteins. Inhibits EGF signaling by mediating the degradation of the Tyr-phosphorylated EGF receptor/EGFR. This Bos taurus (Bovine) protein is Suppressor of cytokine signaling 4 (SOCS4).